We begin with the raw amino-acid sequence, 537 residues long: CTP synthase (537 aa).

Positions 1–265 (MVHFIFVTGG…DNKVLKFFNI (265 aa)) are amidoligase domain. S13 is a CTP binding site. Residue S13 participates in UTP binding. ATP is bound by residues 14-19 (SLGKGL) and D71. Positions 71 and 139 each coordinate Mg(2+). Residues 146–148 (DIE) and K222 each bind CTP. Residue K222 coordinates UTP. Residues 290-536 (RIAIIAKYHK…IKAAIEYNKC (247 aa)) form the Glutamine amidotransferase type-1 domain. G352 provides a ligand contact to L-glutamine. C379 serves as the catalytic Nucleophile; for glutamine hydrolysis. Residues 380–383 (FGMQ), E403, and R464 each bind L-glutamine. Catalysis depends on residues H509 and E511.

The protein belongs to the CTP synthase family. As to quaternary structure, homotetramer.

It catalyses the reaction UTP + L-glutamine + ATP + H2O = CTP + L-glutamate + ADP + phosphate + 2 H(+). The catalysed reaction is L-glutamine + H2O = L-glutamate + NH4(+). The enzyme catalyses UTP + NH4(+) + ATP = CTP + ADP + phosphate + 2 H(+). It functions in the pathway pyrimidine metabolism; CTP biosynthesis via de novo pathway; CTP from UDP: step 2/2. Its activity is regulated as follows. Allosterically activated by GTP, when glutamine is the substrate; GTP has no effect on the reaction when ammonia is the substrate. The allosteric effector GTP functions by stabilizing the protein conformation that binds the tetrahedral intermediate(s) formed during glutamine hydrolysis. Inhibited by the product CTP, via allosteric rather than competitive inhibition. In terms of biological role, catalyzes the ATP-dependent amination of UTP to CTP with either L-glutamine or ammonia as the source of nitrogen. Regulates intracellular CTP levels through interactions with the four ribonucleotide triphosphates. This is CTP synthase from Rickettsia rickettsii (strain Iowa).